Reading from the N-terminus, the 53-residue chain is Snake venom serine protease LmrSP-4 (53 aa).

A disulfide bridge connects residues C26 and C42. Residue H41 is the Charge relay system of the active site.

As to quaternary structure, monomer. Post-translationally, N-glycosylated. As to expression, expressed by the venom gland.

It is found in the secreted. With respect to regulation, inhibited by the small molecule serine protease inhibitors phenylmethylsulfonyl fluoride (PMSF) and benzamidine. Functionally, snake venom serine protease that has fibrinogenolytic activity. Hydrolyzes the alpha-chain of fibrinogen (FGA), without affecting the beta- and the gamma-chains. Also displays hydrolytic activity towards S-2302 (plasma kallikrein substrate) and S-2251 (substrate for plasmin), but has no hydrolytic activity with S-2238 (thrombin substrate) or S-2222 (factor Xa). This chain is Snake venom serine protease LmrSP-4, found in Lachesis muta rhombeata (Bushmaster).